Reading from the N-terminus, the 601-residue chain is UvrABC system protein C (601 aa).

In terms of domain architecture, GIY-YIG spans 17 to 95; that stretch reads TLPGVYRMLD…IKALAPRYNI (79 aa). Residues 204-239 enclose the UVR domain; the sequence is SELINELTRRMTAAAEAMAFEQAAELRDQIQALARV.

Belongs to the UvrC family. As to quaternary structure, interacts with UvrB in an incision complex.

It is found in the cytoplasm. Its function is as follows. The UvrABC repair system catalyzes the recognition and processing of DNA lesions. UvrC both incises the 5' and 3' sides of the lesion. The N-terminal half is responsible for the 3' incision and the C-terminal half is responsible for the 5' incision. The protein is UvrABC system protein C of Chromobacterium violaceum (strain ATCC 12472 / DSM 30191 / JCM 1249 / CCUG 213 / NBRC 12614 / NCIMB 9131 / NCTC 9757 / MK).